Consider the following 303-residue polypeptide: N-acetylmuramic acid 6-phosphate etherase (303 aa).

The 164-residue stretch at 61–224 (IVQAFQQGGR…TTASMILLGK (164 aa)) folds into the SIS domain. E89 acts as the Proton donor in catalysis. E120 is an active-site residue.

The protein belongs to the GCKR-like family. MurNAc-6-P etherase subfamily. In terms of assembly, homodimer.

The enzyme catalyses N-acetyl-D-muramate 6-phosphate + H2O = N-acetyl-D-glucosamine 6-phosphate + (R)-lactate. Its pathway is amino-sugar metabolism; 1,6-anhydro-N-acetylmuramate degradation. The protein operates within amino-sugar metabolism; N-acetylmuramate degradation. It functions in the pathway cell wall biogenesis; peptidoglycan recycling. Functionally, specifically catalyzes the cleavage of the D-lactyl ether substituent of MurNAc 6-phosphate, producing GlcNAc 6-phosphate and D-lactate. Together with AnmK, is also required for the utilization of anhydro-N-acetylmuramic acid (anhMurNAc) either imported from the medium or derived from its own cell wall murein, and thus plays a role in cell wall recycling. The polypeptide is N-acetylmuramic acid 6-phosphate etherase (murQ) (Haemophilus influenzae (strain ATCC 51907 / DSM 11121 / KW20 / Rd)).